Here is a 254-residue protein sequence, read N- to C-terminus: Proteasome subunit alpha (254 aa).

The interval 234 to 254 (EEMLPTPAATEDAPANGDAPS) is disordered.

Belongs to the peptidase T1A family. As to quaternary structure, the 20S proteasome core is composed of 14 alpha and 14 beta subunits that assemble into four stacked heptameric rings, resulting in a barrel-shaped structure. The two inner rings, each composed of seven catalytic beta subunits, are sandwiched by two outer rings, each composed of seven alpha subunits. The catalytic chamber with the active sites is on the inside of the barrel. Has a gated structure, the ends of the cylinder being occluded by the N-termini of the alpha-subunits. Is capped by the proteasome-associated ATPase, ARC.

The protein resides in the cytoplasm. Its pathway is protein degradation; proteasomal Pup-dependent pathway. Its activity is regulated as follows. The formation of the proteasomal ATPase ARC-20S proteasome complex, likely via the docking of the C-termini of ARC into the intersubunit pockets in the alpha-rings, may trigger opening of the gate for substrate entry. Interconversion between the open-gate and close-gate conformations leads to a dynamic regulation of the 20S proteasome proteolysis activity. Component of the proteasome core, a large protease complex with broad specificity involved in protein degradation. This Rhodococcus erythropolis (strain PR4 / NBRC 100887) protein is Proteasome subunit alpha.